The chain runs to 401 residues: S-adenosylmethionine synthase (401 aa).

137-142 (GEGSGD) contacts ATP. The segment at 272 to 305 (GTSAEQGDDGSVGRGNRSNGLITPNRSMSMEATS) is disordered. A compositionally biased stretch (polar residues) spans 287–305 (NRSNGLITPNRSMSMEATS).

It belongs to the AdoMet synthase 2 family. Requires Mg(2+) as cofactor.

The catalysed reaction is L-methionine + ATP + H2O = S-adenosyl-L-methionine + phosphate + diphosphate. It functions in the pathway amino-acid biosynthesis; S-adenosyl-L-methionine biosynthesis; S-adenosyl-L-methionine from L-methionine: step 1/1. In terms of biological role, catalyzes the formation of S-adenosylmethionine from methionine and ATP. The chain is S-adenosylmethionine synthase from Natronomonas pharaonis (strain ATCC 35678 / DSM 2160 / CIP 103997 / JCM 8858 / NBRC 14720 / NCIMB 2260 / Gabara) (Halobacterium pharaonis).